The sequence spans 363 residues: Spermidine/putrescine import ATP-binding protein PotA (363 aa).

Positions 9–239 (IDVRNAVKRY…PANRFVADFI (231 aa)) constitute an ABC transporter domain. 41 to 48 (GPSGCGKT) is a binding site for ATP.

This sequence belongs to the ABC transporter superfamily. Spermidine/putrescine importer (TC 3.A.1.11.1) family. As to quaternary structure, the complex is composed of two ATP-binding proteins (PotA), two transmembrane proteins (PotB and PotC) and a solute-binding protein (PotD).

It localises to the cell inner membrane. It carries out the reaction ATP + H2O + polyamine-[polyamine-binding protein]Side 1 = ADP + phosphate + polyamineSide 2 + [polyamine-binding protein]Side 1.. Its function is as follows. Part of the ABC transporter complex PotABCD involved in spermidine/putrescine import. Responsible for energy coupling to the transport system. This is Spermidine/putrescine import ATP-binding protein PotA from Roseobacter denitrificans (strain ATCC 33942 / OCh 114) (Erythrobacter sp. (strain OCh 114)).